The following is a 456-amino-acid chain: Perilipin-5 (456 aa).

The interval 1–20 (MSEDEAAQAPGPSLSEQDQQ) is disordered. The interaction with LIPE stretch occupies residues 1-108 (MSEDEAAQAP…KLEEKLPFLQ (108 aa)). Residues 1–173 (MSEDEAAQAP…HFLPMTEEEL (173 aa)) are essential for lipid droplet targeting. A phosphoserine mark is found at serine 2, serine 148, and serine 324. Positions 185-456 (VGSVEEQRKH…KHTLMPELDF (272 aa)) are interaction with PNPLA2 and ABHD5. Residues 420-456 (AWQAQHGEGTVLSGNIPEEEPEPPSRPKHTLMPELDF) form a disordered region. The tract at residues 438–456 (EEPEPPSRPKHTLMPELDF) is recruits mitochondria at the lipid droplet surface.

It belongs to the perilipin family. In terms of assembly, homooligomer. Interacts with PNPLA2; prevents interaction of PNPLA2 with ABHD5. Interacts with ABHD5; targets ABHD5 to lipid droplets and promotes interaction of ABHD5 with PNPLA2. Interacts with LIPE. In terms of processing, phosphorylated by PKA. Phosphorylated on serine in skeletal muscle at rest or upon lipolytic stimulation.

The protein localises to the lipid droplet. It localises to the cytoplasm. It is found in the mitochondrion. Lipid droplet-associated protein that maintains the balance between lipogenesis and lipolysis and also regulates fatty acid oxidation in oxidative tissues. Recruits mitochondria to the surface of lipid droplets and is involved in lipid droplet homeostasis by regulating both the storage of fatty acids in the form of triglycerides and the release of fatty acids for mitochondrial fatty acid oxidation. In lipid droplet triacylglycerol hydrolysis, plays a role as a scaffolding protein for three major key lipolytic players: ABHD5, PNPLA2 and LIPE. Reduces the triacylglycerol hydrolase activity of PNPLA2 by recruiting and sequestering PNPLA2 to lipid droplets. Phosphorylation by PKA enables lipolysis probably by promoting release of ABHD5 from the perilipin scaffold and by facilitating interaction of ABHD5 with PNPLA2. Also increases lipolysis through interaction with LIPE and upon PKA-mediated phosphorylation of LIPE. In Ovis aries (Sheep), this protein is Perilipin-5 (Plin5).